We begin with the raw amino-acid sequence, 284 residues long: 8-methylmenaquinol:fumarate reductase membrane anchor subunit (284 aa).

As to quaternary structure, the MFR complex is composed of three subunits: a flavoprotein (SdhA), an iron-sulfur protein (SdhB), and one hydrophobic anchor protein (SdhE).

The protein localises to the periplasm. Its subcellular location is the cell membrane. It catalyses the reaction 8-methylmenaquinone-6 + succinate = 8-methylmenaquinol-6 + fumarate. Membrane anchor subunit of 8-methylmenaquinol:fumarate reductase (MFR), that catalyzes the reduction of fumarate using 8-methylmenaquinol-6 as electron donor. The complex shows no succinate oxidation activity. Is involved in anaerobic metabolism. SdhE likely contains the quinol/quinone binding site. The chain is 8-methylmenaquinol:fumarate reductase membrane anchor subunit from Wolinella succinogenes (strain ATCC 29543 / DSM 1740 / CCUG 13145 / JCM 31913 / LMG 7466 / NCTC 11488 / FDC 602W) (Vibrio succinogenes).